The following is a 132-amino-acid chain: Ribosome-binding factor A (132 aa).

The protein belongs to the RbfA family. In terms of assembly, monomer. Binds 30S ribosomal subunits, but not 50S ribosomal subunits or 70S ribosomes.

The protein localises to the cytoplasm. Its function is as follows. One of several proteins that assist in the late maturation steps of the functional core of the 30S ribosomal subunit. Associates with free 30S ribosomal subunits (but not with 30S subunits that are part of 70S ribosomes or polysomes). Required for efficient processing of 16S rRNA. May interact with the 5'-terminal helix region of 16S rRNA. This Prochlorococcus marinus (strain MIT 9515) protein is Ribosome-binding factor A.